Reading from the N-terminus, the 380-residue chain is MNTHNQSSNQNGGGSGGGGGGGGSSTFSPIVLTSTYRLDVQEKYTFSYEIGSGTYGMVYKADDKKRPNNKVAVKKFRSTKEGEGLSLTAYREIGLLKELSNENIVKLLDVCLNPKDKLLYLIFDYAEFDLFGIIKYHRENGSHFSDATIKSLIWQVLNGIHYLHSNWVIHRDLKPSNILVMGEGKECGTVKIGDFGLARIFQSPLKPLNENGVVVTIWYRSPELLLGSKHYTRAVDIWAIGCIFAELITTKPLFPGKEKDPKIPSLFQDDQVEKIIRVLGKPTLDMWPDIKHLPEWKRLSSMEAFPNSLAKCVGIDENSQAYDLLSKMILYDPSKRITASEALDHPYFKELPLPLPNAFSKPIPYPPRLPINKKKREFDD.

Low complexity predominate over residues 1 to 10 (MNTHNQSSNQ). Residues 1–22 (MNTHNQSSNQNGGGSGGGGGGG) are disordered. Residues 11–22 (NGGGSGGGGGGG) show a composition bias toward gly residues. The Protein kinase domain occupies 44-348 (YTFSYEIGSG…ASEALDHPYF (305 aa)). Residues 50 to 58 (IGSGTYGMV) and Lys-74 each bind ATP. Catalysis depends on Asp-172, which acts as the Proton acceptor.

Belongs to the protein kinase superfamily. CMGC Ser/Thr protein kinase family. CDC2/CDKX subfamily. Component of the Mediator complex. Mg(2+) is required as a cofactor.

The protein localises to the nucleus. The catalysed reaction is L-seryl-[protein] + ATP = O-phospho-L-seryl-[protein] + ADP + H(+). The enzyme catalyses L-threonyl-[protein] + ATP = O-phospho-L-threonyl-[protein] + ADP + H(+). It carries out the reaction [DNA-directed RNA polymerase] + ATP = phospho-[DNA-directed RNA polymerase] + ADP + H(+). Component of the Mediator complex, a coactivator involved in regulated gene transcription of nearly all RNA polymerase II-dependent genes. Mediator functions as a bridge to convey information from gene-specific regulatory proteins to the basal RNA polymerase II transcription machinery. Mediator is recruited to promoters by direct interactions with regulatory proteins and serves as a scaffold for the assembly of a functional pre-initiation complex with RNA polymerase II and the general transcription factors. Phosphorylates the CTD (C-terminal domain) of the large subunit of RNA polymerase II (RNAp II), which may inhibit the formation of a transcription initiation complex. Involved in cell aggregation, but not growth. Required for starvation-induced expression of genes essential for early development of acaA and/or other genes. This chain is Probable cyclin-dependent kinase 8 (cdk8), found in Dictyostelium discoideum (Social amoeba).